The following is a 226-amino-acid chain: 7-cyano-7-deazaguanine synthase (226 aa).

Phe-10 to Ala-20 provides a ligand contact to ATP. Residues Cys-190, Cys-205, Cys-208, and Cys-211 each contribute to the Zn(2+) site.

Belongs to the QueC family. It depends on Zn(2+) as a cofactor.

It carries out the reaction 7-carboxy-7-deazaguanine + NH4(+) + ATP = 7-cyano-7-deazaguanine + ADP + phosphate + H2O + H(+). It participates in purine metabolism; 7-cyano-7-deazaguanine biosynthesis. Catalyzes the ATP-dependent conversion of 7-carboxy-7-deazaguanine (CDG) to 7-cyano-7-deazaguanine (preQ(0)). This chain is 7-cyano-7-deazaguanine synthase, found in Helicobacter pylori (strain Shi470).